A 459-amino-acid chain; its full sequence is Type IV methyl-directed restriction enzyme EcoKMcrB subunit (459 aa).

Residues 201–208, 300–303, and 333–336 contribute to the GTP site; these read GPPGVGKT, DKRG, and NTAD.

Functionally, recognizes N4- and C5-methylcytosine (and 5-hydroxy-methylcytosines) produced by a broad range of DNA methylases and appears to act against 5-methylcytosine preceded by a purine residue. Binds to DNA containing methylated cytosines; also binds to GTP. Isoform 33 kDa is less active than isoform 51 kDa and may play a role in regulating the activity of isoform 51 kDa by competing with it in DNA and protein binding abilities. This Escherichia coli (strain K12) protein is Type IV methyl-directed restriction enzyme EcoKMcrB subunit (mcrB).